A 522-amino-acid polypeptide reads, in one-letter code: Cytochrome bd-I ubiquinol oxidase subunit 1 (522 aa).

Residue Met-1 is modified to N-formylmethionine. Over 1–22 (MLDIVELSRLQFALTAMYHFLF) the chain is Cytoplasmic. His-19 is a binding site for heme b. The chain crosses the membrane as a helical span at residues 23–42 (VPLTLGMAFLLAIMETVYVL). The Periplasmic portion of the chain corresponds to 43 to 94 (SGKQIYKDMTKFWGKLFGINFALGVATGLTMEFQFGTNWSYYSHYVGDIFGA). A helical transmembrane segment spans residues 95-114 (PLAIEGLMAFFLESTFVGLF). Residues 115 to 129 (FFGWDRLGKVQHMCV) are Cytoplasmic-facing. A helical transmembrane segment spans residues 130–149 (TWLVALGSNLSALWILVANG). At 150–187 (WMQNPIASDFNFETMRMEMVSFSELVLNPVAQVKFVHT) the chain is on the periplasmic side. A heme b-binding site is contributed by His-186. A helical membrane pass occupies residues 188–207 (VASGYVTGAMFILGISAWYM). Residues 208-219 (LKGRDFAFAKRS) lie on the Cytoplasmic side of the membrane. A helical transmembrane segment spans residues 220–239 (FAIAASFGMAAVLSVIVLGD). The Periplasmic portion of the chain corresponds to 240-392 (ESGYEMGDVQ…VAPLYFAFRI (153 aa)). A heme b-binding site is contributed by Met-393. The chain crosses the membrane as a helical span at residues 393–412 (MVACGFLLLAIIALSFWSVI). The Cytoplasmic portion of the chain corresponds to 413–470 (RNRIGEKKWLLRAALYGIPLPWIAVEAGWFVAEYGRQPWAIGEVLPTAVANSSLTAGD). Residues 471–490 (LIFSMVLICGLYTLFLVAEL) form a helical membrane-spanning segment. Over 491 to 522 (FLMFKFARLGPSSLKTGRYHFEQSSTTTQPAR) the chain is Periplasmic.

This sequence belongs to the cytochrome ubiquinol oxidase subunit 1 family. Heterodimer of subunits I and II. The cofactor is heme b. Heme d cis-diol is required as a cofactor.

Its subcellular location is the cell inner membrane. The enzyme catalyses 2 a ubiquinol + O2(in) + 4 H(+)(in) = 2 a ubiquinone + 2 H2O(in) + 4 H(+)(out). Its pathway is energy metabolism; oxidative phosphorylation. Its function is as follows. A terminal oxidase that produces a proton motive force by the vectorial transfer of protons across the inner membrane. It is the component of the aerobic respiratory chain of E.coli that predominates when cells are grown at low aeration. Generates a proton motive force using protons and electrons from opposite sides of the membrane to generate H(2)O, transferring 1 proton/electron. This is Cytochrome bd-I ubiquinol oxidase subunit 1 (cydA) from Escherichia coli O6:H1 (strain CFT073 / ATCC 700928 / UPEC).